The chain runs to 84 residues: UPF0291 protein EUBELI_00985 (84 aa).

The protein belongs to the UPF0291 family.

The protein resides in the cytoplasm. The chain is UPF0291 protein EUBELI_00985 from Lachnospira eligens (strain ATCC 27750 / DSM 3376 / VPI C15-48 / C15-B4) (Eubacterium eligens).